The following is a 147-amino-acid chain: Globin, polymeric component P2 (147 aa).

A Globin domain is found at 2 to 146 (PLTADQVAAL…ISDALVAGLE (145 aa)). A heme b-binding site is contributed by His-96.

It belongs to the globin family. Polymer.

The polypeptide is Globin, polymeric component P2 (Glycera dibranchiata (Bloodworm)).